A 108-amino-acid chain; its full sequence is Putative disulfide oxidoreductase YuzD (108 aa).

C16 and C19 are disulfide-bonded.

In Bacillus subtilis (strain 168), this protein is Putative disulfide oxidoreductase YuzD (yuzD).